Here is a 398-residue protein sequence, read N- to C-terminus: S-adenosylmethionine synthase (398 aa).

An ATP-binding site is contributed by His16. Asp18 is a Mg(2+) binding site. Glu51 is a binding site for K(+). 2 residues coordinate L-methionine: Glu64 and Gln108. The flexible loop stretch occupies residues 108–118 (QSADIAQGVDA). ATP contacts are provided by residues 176–178 (DSK), 242–243 (KF), Asp251, 257–258 (RK), Ala274, and Lys278. Asp251 contributes to the L-methionine binding site. Lys282 contacts L-methionine.

This sequence belongs to the AdoMet synthase family. As to quaternary structure, homotetramer; dimer of dimers. It depends on Mg(2+) as a cofactor. The cofactor is K(+).

The protein resides in the cytoplasm. The catalysed reaction is L-methionine + ATP + H2O = S-adenosyl-L-methionine + phosphate + diphosphate. The protein operates within amino-acid biosynthesis; S-adenosyl-L-methionine biosynthesis; S-adenosyl-L-methionine from L-methionine: step 1/1. In terms of biological role, catalyzes the formation of S-adenosylmethionine (AdoMet) from methionine and ATP. The overall synthetic reaction is composed of two sequential steps, AdoMet formation and the subsequent tripolyphosphate hydrolysis which occurs prior to release of AdoMet from the enzyme. The sequence is that of S-adenosylmethionine synthase from Bradyrhizobium diazoefficiens (strain JCM 10833 / BCRC 13528 / IAM 13628 / NBRC 14792 / USDA 110).